The primary structure comprises 505 residues: Lysine--tRNA ligase (505 aa).

Residues Glu-415 and Glu-422 each contribute to the Mg(2+) site.

It belongs to the class-II aminoacyl-tRNA synthetase family. In terms of assembly, homodimer. Mg(2+) is required as a cofactor.

The protein resides in the cytoplasm. The catalysed reaction is tRNA(Lys) + L-lysine + ATP = L-lysyl-tRNA(Lys) + AMP + diphosphate. This Yersinia enterocolitica serotype O:8 / biotype 1B (strain NCTC 13174 / 8081) protein is Lysine--tRNA ligase.